Here is a 66-residue protein sequence, read N- to C-terminus: Beta-defensin 107A (66 aa).

An N-terminal signal peptide occupies residues 1 to 22 (MKIFFFIFAALILLAQIFQART). Cystine bridges form between cysteine 37–cysteine 51 and cysteine 41–cysteine 60.

It belongs to the beta-defensin family.

It localises to the secreted. In terms of biological role, has antibacterial activity. The chain is Beta-defensin 107A (DEFB107A) from Hylobates lar (Lar gibbon).